We begin with the raw amino-acid sequence, 101 residues long: Urease subunit gamma (101 aa).

Belongs to the urease gamma subunit family. As to quaternary structure, heterotrimer of UreA (gamma), UreB (beta) and UreC (alpha) subunits. Three heterotrimers associate to form the active enzyme.

The protein resides in the cytoplasm. It catalyses the reaction urea + 2 H2O + H(+) = hydrogencarbonate + 2 NH4(+). It participates in nitrogen metabolism; urea degradation; CO(2) and NH(3) from urea (urease route): step 1/1. The protein is Urease subunit gamma of Geobacillus kaustophilus (strain HTA426).